A 129-amino-acid chain; its full sequence is Glycine cleavage system H protein (129 aa).

In terms of domain architecture, Lipoyl-binding spans 24–106; it reads LLKIGVSEFA…IGEGWLVILK (83 aa). Lysine 65 is modified (N6-lipoyllysine).

It belongs to the GcvH family. As to quaternary structure, the glycine cleavage system is composed of four proteins: P, T, L and H. The cofactor is (R)-lipoate.

In terms of biological role, the glycine cleavage system catalyzes the degradation of glycine. The H protein shuttles the methylamine group of glycine from the P protein to the T protein. This is Glycine cleavage system H protein from Prochlorococcus marinus (strain MIT 9312).